The primary structure comprises 235 residues: MGKHRGKKYLEVAKLVEIGKLYDIREALELVQKTKTAKFTETVEVALRLGVDPRHADQQIRGTVVLPHGTGKTVKILAITSGENIEKALAAGADYAGAEEYINQIQQGWLDFDLVIATPDMMPKIGRLGKILGTKGLMPNPKSGTVTPDIAAAVSEFKKGKLAFRVDKLGSIHAPIGKVDFDLDKIEENFKAFMDQIIRLKPASSKGQYLRTVAVSLTMGPGVKMDPAIVGKIVG.

The protein belongs to the universal ribosomal protein uL1 family. In terms of assembly, part of the 50S ribosomal subunit.

Functionally, binds directly to 23S rRNA. The L1 stalk is quite mobile in the ribosome, and is involved in E site tRNA release. In terms of biological role, protein L1 is also a translational repressor protein, it controls the translation of the L11 operon by binding to its mRNA. The polypeptide is Large ribosomal subunit protein uL1 (Fusobacterium nucleatum subsp. nucleatum (strain ATCC 25586 / DSM 15643 / BCRC 10681 / CIP 101130 / JCM 8532 / KCTC 2640 / LMG 13131 / VPI 4355)).